The following is a 161-amino-acid chain: Interleukin-17F (161 aa).

The first 28 residues, 1–28 (MKCTRETAMVKSLLLLMLGLAILREVAA), serve as a signal peptide directing secretion. An N-linked (GlcNAc...) asparagine glycan is attached at Asn-83. Cystine bridges form between Cys-100–Cys-150 and Cys-105–Cys-152.

It belongs to the IL-17 family. As to quaternary structure, homodimer; disulfide-linked. Heterodimer with IL17A (IL17A-IL17F). Forms complexes with IL17RA and IL17RC receptors with 2:1 binding stoichiometry: two receptor chains for one interleukin molecule. IL17F homodimer forms predominantly complexes with IL17RC homodimer, whereas IL17A-IL17F favors complexes with IL17RA-IL17RC. IL17RA and IL17RC chains cannot distinguish between IL17A and IL17F molecules, potentially enabling the formation of topologically distinct complexes. As to expression, expressed by T-helper 17 cells (Th17) (at protein level). The expression pattern reflects the differentiation state. In fully differentiated Th17 cells, IL17A-IL17F heterodimers are produced at higher levels than IL17A-IL17A and IL17F-IL17F dimers. Dominantly secreted in intestine. Expressed by resident cells of the lamina propria, both epithelial cells and immune cell subsets including natural killer cells, dendritic cells, macrophages and various T and B cell subsets. Expressed by epithelial cells and innate immune cells in the colon. Expressed in group 3 innate lymphoid cells.

The protein resides in the secreted. Effector cytokine of innate and adaptive immune system involved in antimicrobial host defense and maintenance of tissue integrity. IL17A-IL17F signals via IL17RA-IL17RC heterodimeric receptor complex, triggering homotypic interaction of IL17RA and IL17RC chains with TRAF3IP2 adapter through SEFIR domains. This leads to downstream TRAF6-mediated activation of NF-kappa-B and MAPkinase pathways ultimately resulting in transcriptional activation of cytokines, chemokines, antimicrobial peptides and matrix metalloproteinases, with potential strong immune inflammation. IL17A-IL17F is primarily involved in host defense against extracellular bacteria and fungi by inducing neutrophilic inflammation. As signature effector cytokine of T-helper 17 cells (Th17), primarily induces neutrophil activation and recruitment at infection and inflammatory sites. Stimulates the production of antimicrobial beta-defensins DEFB1, DEFB103A, and DEFB104A by mucosal epithelial cells, limiting the entry of microbes through the epithelial barriers. IL17F homodimer can signal via IL17RC homodimeric receptor complex, triggering downstream activation of TRAF6 and NF-kappa-B signaling pathway. Via IL17RC induces transcriptional activation of IL33, a potent cytokine that stimulates group 2 innate lymphoid cells and adaptive T-helper 2 cells involved in pulmonary allergic response to fungi. Likely via IL17RC, promotes sympathetic innervation of peripheral organs by coordinating the communication between gamma-delta T cells and parenchymal cells. Stimulates sympathetic innervation of thermogenic adipose tissue by driving TGFB1 expression. Regulates the composition of intestinal microbiota and immune tolerance by inducing antimicrobial proteins that specifically control the growth of commensal Firmicutes and Bacteroidetes. In Mus musculus (Mouse), this protein is Interleukin-17F (Il17f).